The primary structure comprises 156 residues: Cell division protein SepF (156 aa).

Basic and acidic residues predominate over residues 23–36 (SYEKEQTDMKKQQD). Residues 23 to 49 (SYEKEQTDMKKQQDPPEQQDVTFPKAQ) form a disordered region.

This sequence belongs to the SepF family. In terms of assembly, homodimer. Interacts with FtsZ.

The protein resides in the cytoplasm. Cell division protein that is part of the divisome complex and is recruited early to the Z-ring. Probably stimulates Z-ring formation, perhaps through the cross-linking of FtsZ protofilaments. Its function overlaps with FtsA. This Bacillus anthracis (strain CDC 684 / NRRL 3495) protein is Cell division protein SepF.